Consider the following 345-residue polypeptide: Uroporphyrinogen decarboxylase (345 aa).

Substrate is bound by residues Arg-28–Arg-32, Asp-77, Tyr-153, Ser-208, and His-322.

This sequence belongs to the uroporphyrinogen decarboxylase family. As to quaternary structure, homodimer.

The protein localises to the cytoplasm. The catalysed reaction is uroporphyrinogen III + 4 H(+) = coproporphyrinogen III + 4 CO2. The protein operates within porphyrin-containing compound metabolism; protoporphyrin-IX biosynthesis; coproporphyrinogen-III from 5-aminolevulinate: step 4/4. Catalyzes the decarboxylation of four acetate groups of uroporphyrinogen-III to yield coproporphyrinogen-III. This Solibacter usitatus (strain Ellin6076) protein is Uroporphyrinogen decarboxylase.